The chain runs to 544 residues: ATP-dependent RNA helicase HAS1 (544 aa).

Low complexity predominate over residues 1–10 (MSSTKPPTTT). Positions 1–59 (MSSTKPPTTTNKRKRTSNAHDEAPAKRVPEASSSKVTLDDSQPAPATSSDAVLGARSAP) are disordered. Over residues 18 to 29 (NAHDEAPAKRVP) the composition is skewed to basic and acidic residues. Polar residues predominate over residues 31–50 (ASSSKVTLDDSQPAPATSSD). A Q motif motif is present at residues 66 to 94 (VPFSTLNLSPPTTAAIERMGFETMTEVQA). In terms of domain architecture, Helicase ATP-binding spans 97–273 (IPPLLAGKDV…RISLRPGPLY (177 aa)). 110 to 117 (ARTGSGKT) is a binding site for ATP. A DEAD box motif is present at residues 220–223 (DEAD). A Helicase C-terminal domain is found at 287–456 (MLEQGYVVCE…DVQKQLESLI (170 aa)). The Bipartite nuclear localization signal signature appears at 299 to 315 (QRFMLLFTFLKKNLKKK). Positions 513–544 (GSVKAKKSRDEDESSDDDGQPKKAYYRNRGRK) are disordered.

The protein belongs to the DEAD box helicase family. DDX18/HAS1 subfamily. In terms of assembly, associates in the nucleolus with the 60S and pre-60S ribosomal subunits.

The protein resides in the nucleus. It localises to the nucleolus. The catalysed reaction is ATP + H2O = ADP + phosphate + H(+). Its function is as follows. ATP-dependent RNA helicase involved in 40S ribosomal subunit biogenesis. Required for the processing and cleavage of 35S pre-rRNA at sites A0, A1, and A2, leading to mature 18S rRNA. The sequence is that of ATP-dependent RNA helicase HAS1 (HAS1) from Cryptococcus neoformans var. neoformans serotype D (strain JEC21 / ATCC MYA-565) (Filobasidiella neoformans).